Reading from the N-terminus, the 185-residue chain is Potassium-transporting ATPase KdpC subunit (185 aa).

A helical transmembrane segment spans residues 8 to 28 (LGLVLIMFVLCGFIFPLTVTA). The tract at residues 113–132 (GQKLSSDAVTTSGSGLDPDI) is disordered. Over residues 114–126 (QKLSSDAVTTSGS) the composition is skewed to polar residues.

The protein belongs to the KdpC family. As to quaternary structure, the system is composed of three essential subunits: KdpA, KdpB and KdpC.

The protein localises to the cell membrane. In terms of biological role, part of the high-affinity ATP-driven potassium transport (or Kdp) system, which catalyzes the hydrolysis of ATP coupled with the electrogenic transport of potassium into the cytoplasm. This subunit acts as a catalytic chaperone that increases the ATP-binding affinity of the ATP-hydrolyzing subunit KdpB by the formation of a transient KdpB/KdpC/ATP ternary complex. The chain is Potassium-transporting ATPase KdpC subunit from Staphylococcus haemolyticus (strain JCSC1435).